A 95-amino-acid polypeptide reads, in one-letter code: Integration host factor subunit beta (95 aa).

This sequence belongs to the bacterial histone-like protein family. Heterodimer of an alpha and a beta chain.

Functionally, this protein is one of the two subunits of integration host factor, a specific DNA-binding protein that functions in genetic recombination as well as in transcriptional and translational control. This chain is Integration host factor subunit beta, found in Psychromonas ingrahamii (strain DSM 17664 / CCUG 51855 / 37).